The primary structure comprises 272 residues: 3-methyl-2-oxobutanoate hydroxymethyltransferase (272 aa).

Residues D42 and D86 each coordinate Mg(2+). 3-methyl-2-oxobutanoate-binding positions include 42–43 (DS), D86, and K116. E118 provides a ligand contact to Mg(2+). E185 (proton acceptor) is an active-site residue.

It belongs to the PanB family. In terms of assembly, homodecamer; pentamer of dimers. Requires Mg(2+) as cofactor.

Its subcellular location is the cytoplasm. The catalysed reaction is 3-methyl-2-oxobutanoate + (6R)-5,10-methylene-5,6,7,8-tetrahydrofolate + H2O = 2-dehydropantoate + (6S)-5,6,7,8-tetrahydrofolate. The protein operates within cofactor biosynthesis; (R)-pantothenate biosynthesis; (R)-pantoate from 3-methyl-2-oxobutanoate: step 1/2. Catalyzes the reversible reaction in which hydroxymethyl group from 5,10-methylenetetrahydrofolate is transferred onto alpha-ketoisovalerate to form ketopantoate. In Prochlorococcus marinus (strain NATL1A), this protein is 3-methyl-2-oxobutanoate hydroxymethyltransferase.